A 158-amino-acid chain; its full sequence is Protein Smg homolog (158 aa).

It belongs to the Smg family.

In Shewanella oneidensis (strain ATCC 700550 / JCM 31522 / CIP 106686 / LMG 19005 / NCIMB 14063 / MR-1), this protein is Protein Smg homolog.